Reading from the N-terminus, the 211-residue chain is Ribosomal RNA large subunit methyltransferase E (211 aa).

S-adenosyl-L-methionine contacts are provided by Gly-60, Trp-62, Asp-80, Asp-96, and Asp-121. The active-site Proton acceptor is Lys-161.

The protein belongs to the class I-like SAM-binding methyltransferase superfamily. RNA methyltransferase RlmE family.

Its subcellular location is the cytoplasm. The enzyme catalyses uridine(2552) in 23S rRNA + S-adenosyl-L-methionine = 2'-O-methyluridine(2552) in 23S rRNA + S-adenosyl-L-homocysteine + H(+). In terms of biological role, specifically methylates the uridine in position 2552 of 23S rRNA at the 2'-O position of the ribose in the fully assembled 50S ribosomal subunit. The protein is Ribosomal RNA large subunit methyltransferase E of Cellvibrio japonicus (strain Ueda107) (Pseudomonas fluorescens subsp. cellulosa).